A 140-amino-acid chain; its full sequence is Nucleoside diphosphate kinase (140 aa).

Positions 11, 59, 87, 93, 104, and 114 each coordinate ATP. His-117 functions as the Pros-phosphohistidine intermediate in the catalytic mechanism.

Belongs to the NDK family. Homotetramer. Mg(2+) serves as cofactor.

It localises to the cytoplasm. It catalyses the reaction a 2'-deoxyribonucleoside 5'-diphosphate + ATP = a 2'-deoxyribonucleoside 5'-triphosphate + ADP. It carries out the reaction a ribonucleoside 5'-diphosphate + ATP = a ribonucleoside 5'-triphosphate + ADP. Functionally, major role in the synthesis of nucleoside triphosphates other than ATP. The ATP gamma phosphate is transferred to the NDP beta phosphate via a ping-pong mechanism, using a phosphorylated active-site intermediate. In Rhodovulum sulfidophilum (Rhodobacter sulfidophilus), this protein is Nucleoside diphosphate kinase.